The following is a 597-amino-acid chain: DNA import protein CedB (597 aa).

A helical membrane pass occupies residues 10-30 (VVLLILGIISFNLVFIILAII). An ATP-binding site is contributed by 286 to 293 (GPTGSGKT).

The protein localises to the cell membrane. Functionally, part of the Ced system, which is involved in DNA import. The chain is DNA import protein CedB from Sulfolobus acidocaldarius (strain ATCC 33909 / DSM 639 / JCM 8929 / NBRC 15157 / NCIMB 11770).